Here is a 173-residue protein sequence, read N- to C-terminus: HAM34 protein (173 aa).

Positions 22-89 (AAPATTPDTA…ADGTQTATAP (68 aa)) are enriched in low complexity. The disordered stretch occupies residues 22-155 (AAPATTPDTA…ATDTTSGASH (134 aa)). A compositionally biased stretch (polar residues) spans 95 to 133 (TEESSASGEMTPTVGTDTSDQVSDSTAAGPSTPEGSMTG). Residues 134–155 (TSTPKASDSSSSATDTTSGASH) show a composition bias toward low complexity.

Germinating spores.

Functionally, could be a structural protein required for the infection process of B.lactucae. This chain is HAM34 protein (HAM34), found in Bremia lactucae (Lettuce downy mildew).